Consider the following 213-residue polypeptide: Putative manganese efflux pump MntP (213 aa).

The next 7 membrane-spanning stretches (helical) occupy residues 6-26, 34-54, 58-78, 107-127, 132-152, 153-173, and 192-212; these read LGVL…GIGM, AFML…FGIL, ALGL…LFFL, GSGG…LFAP, LVVI…SLGT, VGAQ…IMTV, and LAGG…SASP.

Belongs to the MntP (TC 9.B.29) family.

Its subcellular location is the cell membrane. Its function is as follows. Probably functions as a manganese efflux pump. The sequence is that of Putative manganese efflux pump MntP from Heliobacterium modesticaldum (strain ATCC 51547 / Ice1).